The chain runs to 354 residues: MRVADFTFELPDSLIARHPLAERRSSRLLTLDGPTGALAHRQFTDLLEHLRPGDLMVFNNTRVIPARLFGQKASGGKLEILVERVLDSHRVLAHVRSSKSPKPGSSILIDGGGEAEMVARHHALFELRFAEEVLPLLERVGHMPLPPYIDRPDEGADRERYQTVYAQRAGAVAAPTAGLHFDQPLLEAIAAKGVETAFVTLHVGAGTFQPVRVEQIEDHHMHSEWLEVGQDVVDAVAACRARGGRVIAVGTTSVRSLESAARDGELKSFSGDTDIFIYPGRPFHVVDALVTNFHLPESTLLMLVSAFAGYPETMAAYAGAIEHGYRFFSYGDAMFITRNPAPTAPQESAPEDHA.

This sequence belongs to the QueA family. In terms of assembly, monomer.

The protein localises to the cytoplasm. The enzyme catalyses 7-aminomethyl-7-carbaguanosine(34) in tRNA + S-adenosyl-L-methionine = epoxyqueuosine(34) in tRNA + adenine + L-methionine + 2 H(+). It functions in the pathway tRNA modification; tRNA-queuosine biosynthesis. Functionally, transfers and isomerizes the ribose moiety from AdoMet to the 7-aminomethyl group of 7-deazaguanine (preQ1-tRNA) to give epoxyqueuosine (oQ-tRNA). The polypeptide is S-adenosylmethionine:tRNA ribosyltransferase-isomerase (Pseudomonas savastanoi pv. phaseolicola (strain 1448A / Race 6) (Pseudomonas syringae pv. phaseolicola (strain 1448A / Race 6))).